Reading from the N-terminus, the 316-residue chain is MTKEFHHVTVLLHETIDMLDVKPDGIYVDATLGGAGHSEYLLSKLSEKGHLYAFDQDQNAIDNAQKRLAPYIEKGMVTFIKDNFRHLQARLREAGVQEIDGICYDLGVSSPQLDQRERGFSYKKDAPLDMRMNQDASLTAYEVVNHYDYHDLVRIFFKYGEDKFSKQIARKIEQEREVKPIETTTELAEIIKSAKPAKELKKKGHPAKQIFQSIRIEVNDELGAADESIQQAMDMLALDGRISVITFHSLEDRLTKQLFKEASTVEVPKGLPFIPDDLKPKMELVSRKPILPSAEELEANNRSHSAKLRVARKIHK.

S-adenosyl-L-methionine-binding positions include 35–37 (AGH), Asp55, Phe84, Asp105, and Gln112.

The protein belongs to the methyltransferase superfamily. RsmH family.

The protein resides in the cytoplasm. The catalysed reaction is cytidine(1402) in 16S rRNA + S-adenosyl-L-methionine = N(4)-methylcytidine(1402) in 16S rRNA + S-adenosyl-L-homocysteine + H(+). Its function is as follows. Specifically methylates the N4 position of cytidine in position 1402 (C1402) of 16S rRNA. In Streptococcus pneumoniae (strain Hungary19A-6), this protein is Ribosomal RNA small subunit methyltransferase H.